A 418-amino-acid chain; its full sequence is Mitochondrial outer membrane protein SLC25A46 (418 aa).

Ser-32 and Ser-35 each carry phosphoserine. Thr-45 carries the post-translational modification Phosphothreonine. The disordered stretch occupies residues 46–96 (PPDIPGSRNLHWGEKSPSYGVPSAPPTLEGPAEEPFPGGGDGPRPGRSSEQ). One copy of the Solcar 1 repeat lies at 96-187 (QLNRFAGFGI…GIISEFTPLP (92 aa)). The next 6 helical transmembrane spans lie at 103–123 (FGIG…CIVL), 167–187 (FIVQ…TPLP), 202–222 (HLLL…ASLI), 258–278 (LLPL…HYII), 314–334 (FPEL…LYPL), and 382–402 (VFGF…HATI). Residues 311–416 (DAYFPELIAN…KIIYSTLLQN (106 aa)) form a Solcar 2 repeat.

This sequence belongs to the mitochondrial carrier (TC 2.A.29) family. As to quaternary structure, associates with the mitochondrial contact site and cristae organizing system (MICOS) complex. May associate with the endoplasmic reticulum membrane protein complex (EMC). In terms of tissue distribution, widely expressed. Highly expressed in hindbrain, spinal cord and brain coronal sections containing corpus callosum, fornix, optic chiasm, thalamus, hypothalamus, midbrain, pons and cerebellum.

It localises to the mitochondrion outer membrane. In terms of biological role, transmembrane protein of the mitochondrial outer membrane that controls mitochondrial organization. May regulate the assembly of the MICOS (mitochondrial contact site and cristae organizing system) complex which is essential to the biogenesis and dynamics of mitochondrial cristae, the inwards folds of the inner mitochondrial membrane. Through its interaction with the EMC (endoplasmic reticulum membrane protein complex), could regulate mitochondrial lipid homeostasis and thereby mitochondrial fission. This chain is Mitochondrial outer membrane protein SLC25A46, found in Rattus norvegicus (Rat).